The chain runs to 269 residues: Cytochrome c oxidase subunit 3 (269 aa).

Topologically, residues 1–22 (MTHLERSRHQQHPFHMVMPSPW) are mitochondrial matrix. A helical membrane pass occupies residues 23 to 41 (PIVVSFALLSLALSTALTM). At 42-48 (HGYIGNM) the chain is on the mitochondrial intermembrane side. The chain crosses the membrane as a helical span at residues 49–73 (NMVYLALFVLLTSSILWFRDIVAEA). The Mitochondrial matrix segment spans residues 74–80 (TYLGDHT). Residues 81–114 (MAVRKGINLGFLMFVLSEVLIFAGLFWAYFHSAM) form a helical membrane-spanning segment. The Mitochondrial intermembrane portion of the chain corresponds to 115-137 (SPDVTLGACWPPVGIEAVQPTEL). The helical transmembrane segment at 138-161 (PLLNTIILLSSGATVTYSHHALIA) threads the bilayer. The Mitochondrial matrix segment spans residues 162–164 (GNR). The chain crosses the membrane as a helical span at residues 165-188 (NKALSGLLITFWLIVIFVTCQYIE). The Mitochondrial intermembrane portion of the chain corresponds to 189–201 (YTNAAFTISDGVY). A helical membrane pass occupies residues 202-230 (GSVFYAGTGLHFLHMVMLAAMLGVNYWRM). Topologically, residues 231 to 248 (RNYHLTAGHHVGYETTII) are mitochondrial matrix. Residues 249–265 (YTHVLDVIWLFLYVVFY) form a helical membrane-spanning segment. The Mitochondrial intermembrane portion of the chain corresponds to 266 to 269 (WWGV).

This sequence belongs to the cytochrome c oxidase subunit 3 family. In terms of assembly, component of the cytochrome c oxidase (complex IV, CIV), a multisubunit enzyme composed of 12 subunits. The complex is composed of a catalytic core of 3 subunits COX1, COX2 and COX3, encoded in the mitochondrial DNA, and 9 supernumerary subunits COX4, COX5A (or COX5B), COX6, COX7, COX8, COX9, COX12, COX13 and COX26, which are encoded in the nuclear genome. The complex exists as a monomer or a dimer and forms supercomplexes (SCs) in the inner mitochondrial membrane with a dimer of ubiquinol-cytochrome c oxidoreductase (cytochrome b-c1 complex, complex III, CIII), resulting in 2 different assemblies (supercomplexes III(2)IV and III(2)IV(2)). In terms of processing, the N-terminus is blocked.

Its subcellular location is the mitochondrion inner membrane. It carries out the reaction 4 Fe(II)-[cytochrome c] + O2 + 8 H(+)(in) = 4 Fe(III)-[cytochrome c] + 2 H2O + 4 H(+)(out). In terms of biological role, component of the cytochrome c oxidase, the last enzyme in the mitochondrial electron transport chain which drives oxidative phosphorylation. The respiratory chain contains 3 multisubunit complexes succinate dehydrogenase (complex II, CII), ubiquinol-cytochrome c oxidoreductase (cytochrome b-c1 complex, complex III, CIII) and cytochrome c oxidase (complex IV, CIV), that cooperate to transfer electrons derived from NADH and succinate to molecular oxygen, creating an electrochemical gradient over the inner membrane that drives transmembrane transport and the ATP synthase. Cytochrome c oxidase is the component of the respiratory chain that catalyzes the reduction of oxygen to water. Electrons originating from reduced cytochrome c in the intermembrane space (IMS) are transferred via the dinuclear copper A center (CU(A)) of COX2 and heme A of COX1 to the active site in COX1, a binuclear center (BNC) formed by heme A3 and copper B (CU(B)). The BNC reduces molecular oxygen to 2 water molecules using 4 electrons from cytochrome c in the IMS and 4 protons from the mitochondrial matrix. COX3 is a catalytic core subunit. This chain is Cytochrome c oxidase subunit 3 (COX3), found in Saccharomyces cerevisiae (strain ATCC 204508 / S288c) (Baker's yeast).